An 80-amino-acid chain; its full sequence is Clavanin-D (80 aa).

A signal peptide spans 1-19 (MKTTILILLILGLGINAKS). Positions 20–29 (LEERKSEEEK) are excised as a propeptide. At Phe-52 the chain carries Phenylalanine amide. Residues 54 to 80 (DDQQDNGKFYGHYAEDNGKHWYDTGDQ) constitute a propeptide that is removed on maturation.

As to expression, hemocytes and pharyngeal tissues.

It localises to the secreted. Functionally, has antimicrobial activity against E.coli, L.monocytogenes and C.albicans. The polypeptide is Clavanin-D (Styela clava (Sea squirt)).